The chain runs to 189 residues: Thymidine kinase (189 aa).

ATP-binding positions include 9–16 (GTMNSGKT) and 85–88 (DESQ). The Proton acceptor role is filled by Glu86. Zn(2+)-binding residues include Cys143, Cys146, Cys180, and His183.

The protein belongs to the thymidine kinase family. As to quaternary structure, homotetramer.

It is found in the cytoplasm. It carries out the reaction thymidine + ATP = dTMP + ADP + H(+). This chain is Thymidine kinase, found in Streptococcus pyogenes serotype M1.